A 438-amino-acid polypeptide reads, in one-letter code: chitinase-like effector (438 aa).

A signal peptide spans 1-23; it reads MFTPLSSVTALLALSSAFLGAQA. Residues 54–437 enclose the GH18 domain; that stretch reads FIAKGYYTGW…DAIRSGAGLS (384 aa). A chitin-binding site is contributed by W416.

It belongs to the glycosyl hydrolase 18 family.

Its subcellular location is the secreted. Its function is as follows. Catalytically impaired chitinase that binds efficiently to chitin, but not to chitosan, xylan, or cellulose. Despite the lack of chitinolytic activity, retains substrate binding specificity and acts as an effector to prevent chitin-triggered immunity by sequestering immunogenic chitin fragments. Does not function in the protection of fungal cell wall against plant hydrolytic enzymes. The chain is chitinase-like effector from Moniliophthora perniciosa (Witches'-broom disease fungus).